Here is a 391-residue protein sequence, read N- to C-terminus: Chorismate synthase (391 aa).

Arg-48 lines the NADP(+) pocket. Residues Arg-126–Ser-128, Gly-286, Lys-301–Ser-305, and Arg-328 contribute to the FMN site.

Belongs to the chorismate synthase family. FMNH2 serves as cofactor.

The enzyme catalyses 5-O-(1-carboxyvinyl)-3-phosphoshikimate = chorismate + phosphate. It functions in the pathway metabolic intermediate biosynthesis; chorismate biosynthesis; chorismate from D-erythrose 4-phosphate and phosphoenolpyruvate: step 7/7. Its function is as follows. Catalyzes the anti-1,4-elimination of the C-3 phosphate and the C-6 proR hydrogen from 5-enolpyruvylshikimate-3-phosphate (EPSP) to yield chorismate, which is the branch point compound that serves as the starting substrate for the three terminal pathways of aromatic amino acid biosynthesis. This reaction introduces a second double bond into the aromatic ring system. This Saccharolobus islandicus (strain M.16.27) (Sulfolobus islandicus) protein is Chorismate synthase.